A 291-amino-acid chain; its full sequence is Formamidopyrimidine-DNA glycosylase (291 aa).

Pro-2 functions as the Schiff-base intermediate with DNA in the catalytic mechanism. Residue Glu-3 is the Proton donor of the active site. The active-site Proton donor; for beta-elimination activity is the Lys-58. DNA contacts are provided by His-100, Arg-123, and Lys-166. The FPG-type zinc finger occupies 257–291 (SVYGREGKECLQCGTPIIRILQSGRSSFYCSQCQK). Arg-281 acts as the Proton donor; for delta-elimination activity in catalysis.

The protein belongs to the FPG family. Monomer. Requires Zn(2+) as cofactor.

It catalyses the reaction Hydrolysis of DNA containing ring-opened 7-methylguanine residues, releasing 2,6-diamino-4-hydroxy-5-(N-methyl)formamidopyrimidine.. The catalysed reaction is 2'-deoxyribonucleotide-(2'-deoxyribose 5'-phosphate)-2'-deoxyribonucleotide-DNA = a 3'-end 2'-deoxyribonucleotide-(2,3-dehydro-2,3-deoxyribose 5'-phosphate)-DNA + a 5'-end 5'-phospho-2'-deoxyribonucleoside-DNA + H(+). Functionally, involved in base excision repair of DNA damaged by oxidation or by mutagenic agents. Acts as a DNA glycosylase that recognizes and removes damaged bases. Has a preference for oxidized purines, such as 7,8-dihydro-8-oxoguanine (8-oxoG). Has AP (apurinic/apyrimidinic) lyase activity and introduces nicks in the DNA strand. Cleaves the DNA backbone by beta-delta elimination to generate a single-strand break at the site of the removed base with both 3'- and 5'-phosphates. In Bartonella tribocorum (strain CIP 105476 / IBS 506), this protein is Formamidopyrimidine-DNA glycosylase.